Consider the following 217-residue polypeptide: DNA-binding transcriptional activator DevR/DosR (217 aa).

Residues 3–119 (KVFLVDDHEV…ELARAVKDVG (117 aa)) enclose the Response regulatory domain. 4-aspartylphosphate is present on aspartate 54. One can recognise an HTH luxR-type domain in the interval 143–208 (KQDPLSGLTD…QAAVFATELK (66 aa)). Positions 167–186 (NKQIADRMFLAEKTVKNYVS) form a DNA-binding region, H-T-H motif. Threonine 198 and threonine 205 each carry phosphothreonine; by PknH.

In terms of assembly, homodimer. Interacts with NarL. Post-translationally, phosphorylated on Asp-54 by both DevS (DosS) and DosT. Phosphorylated on Thr-198 and Thr-205 by PknH, which enhances DevR dimerization. Aspartate phosphorylation and threonine phosphorylation cooperatively enhance DevR binding to DNA.

Its subcellular location is the cytoplasm. The protein resides in the host cytoplasmic vesicle. The protein localises to the host phagosome. Its function is as follows. Member of the two-component regulatory system DevR/DevS (also called DosR/DosS) involved in onset of the dormancy response. Regulates an approximately 48-member regulon. When phosphorylated binds and activates the promoter of DevR regulon genes in response to hypoxia. The presence of target DNA increases stability of phospho-DevR in vitro. Activates its own transcription under hypoxic but not aerobic conditions, probably binds as a dimer to tandem binding sites within the devR and hspX promoters. Accepts a phosphate group from DevS (DosS) and from DosT. Does not regulate transcription of dosT. This is DNA-binding transcriptional activator DevR/DosR from Mycobacterium tuberculosis (strain ATCC 25618 / H37Rv).